A 349-amino-acid chain; its full sequence is 3-dehydroquinate synthase (349 aa).

NAD(+) contacts are provided by residues 63 to 68 (DGEDYK), 97 to 101 (GVIGD), 121 to 122 (TT), K134, K143, and 161 to 164 (FLQT). Positions 176, 235, and 252 each coordinate Zn(2+).

Belongs to the sugar phosphate cyclases superfamily. Dehydroquinate synthase family. The cofactor is Co(2+). Zn(2+) serves as cofactor. Requires NAD(+) as cofactor.

The protein resides in the cytoplasm. It carries out the reaction 7-phospho-2-dehydro-3-deoxy-D-arabino-heptonate = 3-dehydroquinate + phosphate. It functions in the pathway metabolic intermediate biosynthesis; chorismate biosynthesis; chorismate from D-erythrose 4-phosphate and phosphoenolpyruvate: step 2/7. Catalyzes the conversion of 3-deoxy-D-arabino-heptulosonate 7-phosphate (DAHP) to dehydroquinate (DHQ). The chain is 3-dehydroquinate synthase from Nitratiruptor sp. (strain SB155-2).